The sequence spans 214 residues: Large ribosomal subunit protein bL25 (214 aa).

Disordered regions lie at residues 1 to 23 and 182 to 214; these read MSNE…SRRL and DHDQ…ASEE. Residues 200–214 are compositionally biased toward acidic residues; that stretch reads DDDDAAEGEEAASEE.

The protein belongs to the bacterial ribosomal protein bL25 family. CTC subfamily. Part of the 50S ribosomal subunit; part of the 5S rRNA/L5/L18/L25 subcomplex. Contacts the 5S rRNA. Binds to the 5S rRNA independently of L5 and L18.

Its function is as follows. This is one of the proteins that binds to the 5S RNA in the ribosome where it forms part of the central protuberance. The chain is Large ribosomal subunit protein bL25 from Alcanivorax borkumensis (strain ATCC 700651 / DSM 11573 / NCIMB 13689 / SK2).